Here is a 906-residue protein sequence, read N- to C-terminus: Protein translocase subunit SecA (906 aa).

ATP-binding positions include Gln87, 105–109 (GEGKT), and Asp512. The interval 839–896 (LEEQQRQQSEAAPRTYTHATAESQLADEEAAGEEGHTTFVRDEQKIGRNDPCPCGSGK) is disordered. Residues 871 to 886 (EEGHTTFVRDEQKIGR) show a composition bias toward basic and acidic residues. Zn(2+)-binding residues include Cys890, Cys892, Cys901, and His902.

It belongs to the SecA family. As to quaternary structure, monomer and homodimer. Part of the essential Sec protein translocation apparatus which comprises SecA, SecYEG and auxiliary proteins SecDF-YajC and YidC. Zn(2+) serves as cofactor.

It is found in the cell inner membrane. It localises to the cytoplasm. The enzyme catalyses ATP + H2O + cellular proteinSide 1 = ADP + phosphate + cellular proteinSide 2.. Part of the Sec protein translocase complex. Interacts with the SecYEG preprotein conducting channel. Has a central role in coupling the hydrolysis of ATP to the transfer of proteins into and across the cell membrane, serving both as a receptor for the preprotein-SecB complex and as an ATP-driven molecular motor driving the stepwise translocation of polypeptide chains across the membrane. This is Protein translocase subunit SecA from Aeromonas salmonicida (strain A449).